The chain runs to 382 residues: Beta-1,4-galactosyltransferase 6 (382 aa).

Topologically, residues 1–15 (MSALKRMMRVSNRSL) are cytoplasmic. Residues 16-35 (IAFIFFFSLSTSCLYFIYVA) traverse the membrane as a helical; Signal-anchor for type II membrane protein segment. Over 36 to 382 (PGIANTYLFM…MPELAPVEDY (347 aa)) the chain is Lumenal. N-linked (GlcNAc...) asparagine glycans are attached at residues Asn71, Asn75, Asn83, Asn84, Asn99, and Asn122. A disulfide bridge links Cys108 with Cys152. Residues 163 to 167 (PFRNR), 202 to 204 (FNR), 229 to 230 (VD), Tyr258, and Trp290 contribute to the UDP-alpha-D-galactose site. Residues Cys223 and Cys242 are joined by a disulfide bond. Asp230 provides a ligand contact to Mn(2+). 292-295 (GEDD) lines the N-acetyl-D-glucosamine pocket. Asn307 is a glycosylation site (N-linked (GlcNAc...) asparagine). His323 lines the Mn(2+) pocket. 323–324 (HH) provides a ligand contact to UDP-alpha-D-galactose. Arg334 lines the N-acetyl-D-glucosamine pocket. Asn367 carries an N-linked (GlcNAc...) asparagine glycan.

The protein belongs to the glycosyltransferase 7 family. The cofactor is Mn(2+). Mg(2+) serves as cofactor. Ca(2+) is required as a cofactor. As to expression, highest expression in brain with lower levels found in lungs, heart, skeletal muscle and kidney. Lowest expression in testis, liver and spleen.

The protein resides in the golgi apparatus. Its subcellular location is the golgi stack membrane. It catalyses the reaction a beta-D-glucosyl-(1&lt;-&gt;1')-N-acylsphing-4-enine + UDP-alpha-D-galactose = a beta-D-Gal-(1-&gt;4)-beta-D-Glc-(1&lt;-&gt;1)-Cer(d18:1(4E)) + UDP + H(+). The protein operates within protein modification; protein glycosylation. It functions in the pathway sphingolipid metabolism. Inhibited by EDTA. Catalyzes the synthesis of lactosylceramide (LacCer) via the transfer of galactose from UDP-galactose to glucosylceramide (GlcCer). LacCer is the starting point in the biosynthesis of all gangliosides (membrane-bound glycosphingolipids) which play pivotal roles in the CNS including neuronal maturation and axonal and myelin formation. The protein is Beta-1,4-galactosyltransferase 6 of Rattus norvegicus (Rat).